A 193-amino-acid chain; its full sequence is dTTP/UTP pyrophosphatase (193 aa).

The active-site Proton acceptor is the aspartate 70.

The protein belongs to the Maf family. YhdE subfamily. A divalent metal cation serves as cofactor.

It is found in the cytoplasm. The catalysed reaction is dTTP + H2O = dTMP + diphosphate + H(+). It catalyses the reaction UTP + H2O = UMP + diphosphate + H(+). Its function is as follows. Nucleoside triphosphate pyrophosphatase that hydrolyzes dTTP and UTP. May have a dual role in cell division arrest and in preventing the incorporation of modified nucleotides into cellular nucleic acids. This Alcanivorax borkumensis (strain ATCC 700651 / DSM 11573 / NCIMB 13689 / SK2) protein is dTTP/UTP pyrophosphatase.